Consider the following 392-residue polypeptide: Phosphoglycerate kinase (392 aa).

Substrate is bound by residues 21 to 23 (DFN), Arg36, 59 to 62 (HLGR), Arg118, and Arg151. ATP contacts are provided by residues Lys202, Glu321, and 347 to 350 (GGDS).

This sequence belongs to the phosphoglycerate kinase family. Monomer.

The protein resides in the cytoplasm. The enzyme catalyses (2R)-3-phosphoglycerate + ATP = (2R)-3-phospho-glyceroyl phosphate + ADP. It participates in carbohydrate degradation; glycolysis; pyruvate from D-glyceraldehyde 3-phosphate: step 2/5. The chain is Phosphoglycerate kinase from Symbiobacterium thermophilum (strain DSM 24528 / JCM 14929 / IAM 14863 / T).